The following is a 229-amino-acid chain: ADP-ribosylation factor-like protein 6-interacting protein 4 (229 aa).

Residues 1-20 are compositionally biased toward basic residues; sequence MAHVGSRKRSRSRSRSRSGR. The interval 1–152 is disordered; the sequence is MAHVGSRKRS…EDNDGPVLTD (152 aa). Basic and acidic residues predominate over residues 21-35; it reads RGSEKRSKRSSKDAS. Residues 66–87 are compositionally biased toward low complexity; that stretch reads SRSSSTSSSSSSSSSASSSSSS. A compositionally biased stretch (basic residues) spans 90–117; sequence RKKRAKHKEKKRKKKKKKRKKKLKKRVK. Phosphoserine occurs at positions 140 and 174. Lysine 191 participates in a covalent cross-link: Glycyl lysine isopeptide (Lys-Gly) (interchain with G-Cter in SUMO2).

It belongs to the ARL6IP4 family. In terms of assembly, interacts with ZCCHC17. Interacts with SRSF2. Interacts with ARL6. In terms of tissue distribution, widely expressed. Expressed at high level in testis and thymus.

The protein resides in the nucleus. It is found in the nucleolus. It localises to the nucleus speckle. Involved in modulating alternative pre-mRNA splicing with either 5' distal site activation or preferential use of 3' proximal site. The polypeptide is ADP-ribosylation factor-like protein 6-interacting protein 4 (Arl6ip4) (Mus musculus (Mouse)).